A 123-amino-acid polypeptide reads, in one-letter code: MSPLIVGTLIIILLSGLATAFYVTWQGRLICAGVGLILEQAYEGGQMFNTLMAHCFETYNGVEKSGTQCVADWLKVGLLAVTFGAGGPRLVNTLGGSSPTTKRVIYIVMILLVLITLAVNLKH.

The N-terminal stretch at 1–20 is a signal peptide; sequence MSPLIVGTLIIILLSGLATA. Glycine 96 is lipidated: GPI-anchor amidated glycine. Positions 97–123 are cleaved as a propeptide — removed in mature form; it reads SSPTTKRVIYIVMILLVLITLAVNLKH.

It is found in the cell membrane. This is an uncharacterized protein from Schizosaccharomyces pombe (strain 972 / ATCC 24843) (Fission yeast).